Reading from the N-terminus, the 252-residue chain is Probable NADP-dependent dehydrogenase HI_1430 (252 aa).

7–31 (LVTGATAGFGLAICKKLIEAGYKVI) is an NADP(+) binding site. S137 is a binding site for substrate. Residue Y150 is the Proton acceptor of the active site.

It belongs to the short-chain dehydrogenases/reductases (SDR) family.

The sequence is that of Probable NADP-dependent dehydrogenase HI_1430 from Haemophilus influenzae (strain ATCC 51907 / DSM 11121 / KW20 / Rd).